We begin with the raw amino-acid sequence, 459 residues long: Zinc finger chaperone zpr1 (459 aa).

2 consecutive C4-type zinc fingers follow at residues 38–70 and 259–291; these read CMECGKNGTTKLLLTVIPYFREVVLMSFECPHC and CPSCSHQCDTHMKLLDIPHFKEVIIMSTVCDRC.

It belongs to the ZPR1 family.

It is found in the cytoplasm. The protein localises to the nucleus. Acts as a protein folding chaperone for elongation factor 1-alpha. The sequence is that of Zinc finger chaperone zpr1 from Schizosaccharomyces pombe (strain 972 / ATCC 24843) (Fission yeast).